The chain runs to 197 residues: CRISPR system CMR subunit Cmr7 1 (197 aa).

It belongs to the CRISPR system Cmr7 family. Possible homodimer. Part of the CMR ribonucleoprotein complex, consisting of crRNA plus Cmr1/Cmr2/Cmr3/Cmr4/Cmr5/Cmr6 at 1:1 and possibly 3 Cmr7 dimers. A Cmr2/Cmr3/Cmr7 subcomplex without crRNA can also be isolated. It does not cleave target RNA.

The protein localises to the cytoplasm. Functionally, CRISPR (clustered regularly interspaced short palindromic repeat) is an adaptive immune system that provides protection against mobile genetic elements (viruses, transposable elements and conjugative plasmids). CRISPR clusters contain spacers, sequences complementary to antecedent mobile elements, and target invading nucleic acids. CRISPR clusters are transcribed and processed into CRISPR RNA (crRNA). The CMR complex degrades RNA complementary to the crRNA (target RNA) within UA dinucleotides, generating 3'-OH and 5'-phosphate ends. Activity is dependent on the 8 nt long 5' tag in the crRNA, an unpaired 3' flag on the target RNA, and is stimulated by ATP. Some cleavage of the guide crRNA can also be observed. This chain is CRISPR system CMR subunit Cmr7 1 (cmr7A), found in Saccharolobus solfataricus (strain ATCC 35092 / DSM 1617 / JCM 11322 / P2) (Sulfolobus solfataricus).